A 126-amino-acid polypeptide reads, in one-letter code: Arginine decarboxylase proenzyme (126 aa).

Ser74 acts as the Schiff-base intermediate with substrate; via pyruvic acid in catalysis. Ser74 carries the pyruvic acid (Ser); by autocatalysis modification. His79 acts as the Proton acceptor; for processing activity in catalysis. Catalysis depends on Cys94, which acts as the Proton donor; for catalytic activity.

The protein belongs to the prokaryotic AdoMetDC family. Type 1 subfamily. As to quaternary structure, heterooctamer of four alpha and four beta chains arranged as a tetramer of alpha/beta heterodimers. Pyruvate serves as cofactor. In terms of processing, is synthesized initially as an inactive proenzyme. Formation of the active enzyme involves a self-maturation process in which the active site pyruvoyl group is generated from an internal serine residue via an autocatalytic post-translational modification. Two non-identical subunits are generated from the proenzyme in this reaction, and the pyruvate is formed at the N-terminus of the alpha chain, which is derived from the carboxyl end of the proenzyme. The post-translation cleavage follows an unusual pathway, termed non-hydrolytic serinolysis, in which the side chain hydroxyl group of the serine supplies its oxygen atom to form the C-terminus of the beta chain, while the remainder of the serine residue undergoes an oxidative deamination to produce ammonia and the pyruvoyl group blocking the N-terminus of the alpha chain.

The catalysed reaction is L-arginine + H(+) = agmatine + CO2. It functions in the pathway amine and polyamine biosynthesis; agmatine biosynthesis; agmatine from L-arginine: step 1/1. Its function is as follows. Specifically catalyzes the decarboxylation of L-arginine to agmatine. Has no S-adenosylmethionine decarboxylase (AdoMetDC) activity. This Pyrobaculum calidifontis (strain DSM 21063 / JCM 11548 / VA1) protein is Arginine decarboxylase proenzyme.